The chain runs to 431 residues: Protein translocase subunit SecY (431 aa).

Residues 1–17 lie on the Cytoplasmic side of the membrane; the sequence is MFKTISNFMRVSDIRNK. The chain crosses the membrane as a helical span at residues 18 to 38; that stretch reads IIFTLLMLIVFRIGAFIPVPY. Residues 39 to 66 are Extracellular-facing; it reads VNAEALQAQSQMGVFDLLNTFGGGALYQ. Residues 67-87 form a helical membrane-spanning segment; sequence FSIFAMGITPYITASIIIQLL. Residues 88–115 are Cytoplasmic-facing; it reads QMDVVPKFTEWSKQGEVGRRKLAQFTRY. The helical transmembrane segment at 116-136 threads the bilayer; the sequence is FTIVLGFIQALGMSYGFNNLA. The Extracellular portion of the chain corresponds to 137 to 145; sequence NGMLIEKSG. The chain crosses the membrane as a helical span at residues 146 to 166; it reads VSTYLIIALVLTGGTAFLMWL. Topologically, residues 167–177 are cytoplasmic; it reads GEQITSHGVGN. Residues 178–198 form a helical membrane-spanning segment; the sequence is GISIIIFAGIVSSIPKTIGQI. At 199 to 213 the chain is on the extracellular side; that stretch reads YETQFVGSNDQLFIH. The helical transmembrane segment at 214-234 threads the bilayer; that stretch reads IVKVALLVIAILAVIVGVIFI. At 235 to 261 the chain is on the cytoplasmic side; the sequence is QQAVRKIAIQYAKGTGRSPAGGGQSTH. The chain crosses the membrane as a helical span at residues 262–282; sequence LPLKVNPAGVIPVIFAVAFLI. Topologically, residues 283–308 are extracellular; it reads TPRTIASFFGTNDVTKWIQNNFDNTH. A helical transmembrane segment spans residues 309-329; sequence PVGMAIYVALIIAFTYFYAFV. Topologically, residues 330 to 368 are cytoplasmic; it reads QVNPEQMADNLKKQGGYIPGVRPGKMTQDRITSILYRLT. 2 helical membrane-spanning segments follow: residues 369 to 389 and 390 to 410; these read FVGSIFLAVISILPIFFIQFA and GLPQSAQIGGTSLLIVVGVAL. Residues 411–431 are Cytoplasmic-facing; it reads ETMKQLESQLVKRNYRGFMKN.

Belongs to the SecY/SEC61-alpha family. Component of the Sec protein translocase complex. Heterotrimer consisting of SecY, SecE and SecG subunits. The heterotrimers can form oligomers, although 1 heterotrimer is thought to be able to translocate proteins. Interacts with the ribosome. Interacts with SecDF, and other proteins may be involved. Interacts with SecA. Interacts with FloT.

It localises to the cell membrane. The protein resides in the membrane raft. The central subunit of the protein translocation channel SecYEG. Consists of two halves formed by TMs 1-5 and 6-10. These two domains form a lateral gate at the front which open onto the bilayer between TMs 2 and 7, and are clamped together by SecE at the back. The channel is closed by both a pore ring composed of hydrophobic SecY resides and a short helix (helix 2A) on the extracellular side of the membrane which forms a plug. The plug probably moves laterally to allow the channel to open. The ring and the pore may move independently. The sequence is that of Protein translocase subunit SecY from Bacillus subtilis (strain 168).